The primary structure comprises 395 residues: Chaperone protein DnaJ 2 (395 aa).

Residues 10 to 75 (DYYADLGVSK…TKRREYDDLK (66 aa)) enclose the J domain. The CR-type zinc finger occupies 165-242 (GTTIPVELTG…CRGRGTVRRT (78 aa)). Zn(2+) is bound by residues cysteine 178, cysteine 181, cysteine 194, cysteine 197, cysteine 216, cysteine 219, cysteine 230, and cysteine 233. CXXCXGXG motif repeat units lie at residues 178–185 (CNTCHGSG), 194–201 (CGQCNGSG), 216–223 (CTNCGGTG), and 230–237 (CVDCRGRG).

Belongs to the DnaJ family. In terms of assembly, homodimer. Zn(2+) serves as cofactor.

The protein resides in the cytoplasm. Functionally, participates actively in the response to hyperosmotic and heat shock by preventing the aggregation of stress-denatured proteins and by disaggregating proteins, also in an autonomous, DnaK-independent fashion. Unfolded proteins bind initially to DnaJ; upon interaction with the DnaJ-bound protein, DnaK hydrolyzes its bound ATP, resulting in the formation of a stable complex. GrpE releases ADP from DnaK; ATP binding to DnaK triggers the release of the substrate protein, thus completing the reaction cycle. Several rounds of ATP-dependent interactions between DnaJ, DnaK and GrpE are required for fully efficient folding. Also involved, together with DnaK and GrpE, in the DNA replication of plasmids through activation of initiation proteins. The chain is Chaperone protein DnaJ 2 from Corynebacterium efficiens (strain DSM 44549 / YS-314 / AJ 12310 / JCM 11189 / NBRC 100395).